Reading from the N-terminus, the 393-residue chain is Probable protein phosphatase 2C 68 (393 aa).

The 304-residue stretch at 56-359 (DFSIAVVQAN…DDITVVVIFI (304 aa)) folds into the PPM-type phosphatase domain. Aspartate 87, glycine 88, aspartate 291, and aspartate 350 together coordinate Mn(2+).

It belongs to the PP2C family. Mg(2+) serves as cofactor. The cofactor is Mn(2+).

The enzyme catalyses O-phospho-L-seryl-[protein] + H2O = L-seryl-[protein] + phosphate. It catalyses the reaction O-phospho-L-threonyl-[protein] + H2O = L-threonyl-[protein] + phosphate. May dephosphorylate and repress plasma membrane H(+)-ATPases (PM H(+)-ATPases, e.g. AHA1 and AHA2), thus influencing negatively plant growth and fitness. This Arabidopsis thaliana (Mouse-ear cress) protein is Probable protein phosphatase 2C 68.